The primary structure comprises 628 residues: Putative serine esterase Mb1866c (628 aa).

Catalysis depends on Ser156, which acts as the Acyl-ester intermediate. Active-site charge relay system residues include Asp322 and His350.

The protein belongs to the CocE/NonD hydrolase family.

The polypeptide is Putative serine esterase Mb1866c (Mycobacterium bovis (strain ATCC BAA-935 / AF2122/97)).